Consider the following 32-residue polypeptide: MSDIN-like toxin proprotein 2 (32 aa).

A propeptide spanning residues 1-10 (MSDINATRVP) is cleaved from the precursor. The segment at residues 11-17 (AWLAECP) is a cross-link (cyclopeptide (Ala-Pro)). Residues 18–32 (CVGDDISHLLTRGEK) constitute a propeptide that is removed on maturation.

This sequence belongs to the MSDIN fungal toxin family. Processed by the macrocyclase-peptidase enzyme POPB to yield a toxic cyclic heptapeptide. POPB first removes 10 residues from the N-terminus. Conformational trapping of the remaining peptide forces the enzyme to release this intermediate rather than proceed to macrocyclization. The enzyme rebinds the remaining peptide in a different conformation and catalyzes macrocyclization of the N-terminal 7 residues.

Its function is as follows. Probable toxin that belongs to the MSDIN-like toxin family responsible for a large number of food poisoning cases and deaths. The protein is MSDIN-like toxin proprotein 2 of Amanita rimosa.